A 348-amino-acid polypeptide reads, in one-letter code: Tetraacyldisaccharide 4'-kinase (348 aa).

ATP is bound at residue 50–57; sequence TMGGTGKT.

This sequence belongs to the LpxK family.

It catalyses the reaction a lipid A disaccharide + ATP = a lipid IVA + ADP + H(+). Its pathway is glycolipid biosynthesis; lipid IV(A) biosynthesis; lipid IV(A) from (3R)-3-hydroxytetradecanoyl-[acyl-carrier-protein] and UDP-N-acetyl-alpha-D-glucosamine: step 6/6. Transfers the gamma-phosphate of ATP to the 4'-position of a tetraacyldisaccharide 1-phosphate intermediate (termed DS-1-P) to form tetraacyldisaccharide 1,4'-bis-phosphate (lipid IVA). The polypeptide is Tetraacyldisaccharide 4'-kinase (Desulfotalea psychrophila (strain LSv54 / DSM 12343)).